The chain runs to 354 residues: Ubiquitin-conjugating enzyme E2 Z (354 aa).

The disordered stretch occupies residues 1–21 (MAESPTEEAATAGAGAAGPGA). In terms of domain architecture, UBC core spans 99–253 (QCLLRIKRDI…IRHETIRVAV (155 aa)). The Glycyl thioester intermediate role is filled by Cys-188. A disordered region spans residues 332–354 (NAEMDSDSSSSGTETDLHGSLRV). At Ser-337 the chain carries Phosphoserine.

It belongs to the ubiquitin-conjugating enzyme family. As to expression, widely expressed. Highly in placenta, pancreas, spleen and testis.

It localises to the cytoplasm. It is found in the nucleus. It catalyses the reaction S-ubiquitinyl-[E1 ubiquitin-activating enzyme]-L-cysteine + [E2 ubiquitin-conjugating enzyme]-L-cysteine = [E1 ubiquitin-activating enzyme]-L-cysteine + S-ubiquitinyl-[E2 ubiquitin-conjugating enzyme]-L-cysteine.. Its pathway is protein modification; protein ubiquitination. In terms of biological role, catalyzes the covalent attachment of ubiquitin to other proteins. Specific substrate for UBA6, not charged with ubiquitin by UBE1. May be involved in apoptosis regulation. This Homo sapiens (Human) protein is Ubiquitin-conjugating enzyme E2 Z (UBE2Z).